Here is a 101-residue protein sequence, read N- to C-terminus: Citrate lyase acyl carrier protein (101 aa).

Residue serine 14 is modified to O-(phosphoribosyl dephospho-coenzyme A)serine.

The protein belongs to the CitD family. Oligomer with a subunit composition of (alpha,beta,gamma)6.

It localises to the cytoplasm. In terms of biological role, covalent carrier of the coenzyme of citrate lyase. This Clostridium perfringens (strain 13 / Type A) protein is Citrate lyase acyl carrier protein.